The following is a 269-amino-acid chain: Calretinin (269 aa).

6 EF-hand domains span residues 14–49 (LSASQFLDVWRHFDADGNGYIEGKELENFFQELESA), 61–96 (SLGDKMKEFMHKYDKNADGKIEMAELAQILPTEENF), 105–140 (GSSSEFMEAWRRYDTDRSGYIEANELKGFLSDLLKK), 149–184 (KLQEYTQTILRMFDMNGDGKLGLSEMSRLLPVQENF), 193–228 (LSSEEFNAIFAFYDKDGSGFIDEHELDALLKDLYEK), and 230–265 (KKEMSIQQLTNYRRSIMNLSDGGKLYRKELEVVLCS). Residues Asp-27, Asp-29, Asn-31, Tyr-33, Glu-38, Asp-74, Asn-76, Asp-78, Lys-80, Glu-85, Asp-118, Asp-120, Ser-122, Tyr-124, Glu-129, Asp-162, Asn-164, Asp-166, Lys-168, Glu-173, Asp-206, Asp-208, Ser-210, and Glu-217 each coordinate Ca(2+).

Belongs to the calbindin family.

It is found in the synapse. The protein localises to the cell projection. It localises to the dendrite. Its function is as follows. Calcium-binding protein involved in calcium homeostasis and signal transduction. It plays a critical role in buffering intracellular calcium levels and modulating calcium-dependent signaling pathways. Predominantly expressed in specific neuronal populations, influences synaptic plasticity and neuronal excitability, contributing to learning and memory. During embryonic development, it facilitates neuronal differentiation and maturation. The polypeptide is Calretinin (CALB2) (Gallus gallus (Chicken)).